A 424-amino-acid chain; its full sequence is Putative glutamate--cysteine ligase 2-3 (424 aa).

Disordered regions lie at residues 1 to 20 and 405 to 424; these read MQMAGRGANRRGQHRSPVLV and GAAADAHKDPAPMLTRVRRP.

This sequence belongs to the glutamate--cysteine ligase type 2 family. YbdK subfamily.

It catalyses the reaction L-cysteine + L-glutamate + ATP = gamma-L-glutamyl-L-cysteine + ADP + phosphate + H(+). Functionally, ATP-dependent carboxylate-amine ligase which exhibits weak glutamate--cysteine ligase activity. This is Putative glutamate--cysteine ligase 2-3 from Paenarthrobacter aurescens (strain TC1).